Consider the following 309-residue polypeptide: Ribonuclease Z (309 aa).

7 residues coordinate Zn(2+): histidine 64, histidine 66, aspartate 68, histidine 69, histidine 141, aspartate 209, and histidine 267. Aspartate 68 functions as the Proton acceptor in the catalytic mechanism.

This sequence belongs to the RNase Z family. Homodimer. Zn(2+) serves as cofactor.

It catalyses the reaction Endonucleolytic cleavage of RNA, removing extra 3' nucleotides from tRNA precursor, generating 3' termini of tRNAs. A 3'-hydroxy group is left at the tRNA terminus and a 5'-phosphoryl group is left at the trailer molecule.. Its function is as follows. Zinc phosphodiesterase, which displays some tRNA 3'-processing endonuclease activity. Probably involved in tRNA maturation, by removing a 3'-trailer from precursor tRNA. The protein is Ribonuclease Z of Picrophilus torridus (strain ATCC 700027 / DSM 9790 / JCM 10055 / NBRC 100828 / KAW 2/3).